A 291-amino-acid polypeptide reads, in one-letter code: uncharacterized protein (291 aa).

6 helical membrane-spanning segments follow: residues 13–33 (FDLF…MEMG), 40–60 (LGTV…LGFL), 81–101 (GFLN…LICI), 128–148 (FGLF…RLLL), 158–178 (VILG…YLEY), and 220–240 (GNVW…ILLA). An N-linked (GlcNAc...) asparagine glycan is attached at asparagine 249. Residues 269 to 291 (MASEDPPKDPLPRQEGGGGDTIA) form a disordered region.

The protein resides in the membrane. This is an uncharacterized protein from Encephalitozoon cuniculi (strain GB-M1) (Microsporidian parasite).